Here is a 962-residue protein sequence, read N- to C-terminus: Rho GTPase-activating protein syd-1 (962 aa).

Disordered regions lie at residues 231 to 367 (GKKS…MRSD), 397 to 419 (PRTLRQPNDSNKSNSLPRRRIMT), and 437 to 471 (CGEESDGAISAPEYSSPPFSRLTQQQQFRLSNGSP). Polar residues-rich tracts occupy residues 243-261 (NATTTSTMRAAHASTSSPR), 323-345 (SFNSAPGVSSSAPMYTLPRSSTA), 401-412 (RQPNDSNKSNSL), and 453-471 (PPFSRLTQQQQFRLSNGSP). Positions 572–696 (RAAGPGINVD…NDDRVFALNL (125 aa)) constitute a C2 domain. The 195-residue stretch at 729–923 (VPLGRLVQRE…LDMNQASSSL (195 aa)) folds into the Rho-GAP domain. A compositionally biased stretch (polar residues) spans 934 to 947 (VNSESGSDSPATSG). Residues 934–962 (VNSESGSDSPATSGQKGGGGVSYVSESQC) form a disordered region.

It is found in the synapse. Probable GTPase activator for the Rho-type GTPases by converting them to an inactive GDP-bound state. Regulates the localization and assembly of presynaptic components during presynaptic development and is required for specifying the identity of axons during initial polarity acquisition. In these roles it is thought to act cell autonomously downstream of syg-1 and syg-2 and upstream of syd-2, possibly as a positive regulator of the latter. Required for the control of movement, egg-laying and the correct localization of elks-1. This chain is Rho GTPase-activating protein syd-1, found in Caenorhabditis briggsae.